The sequence spans 1387 residues: Collagen-like protein 6 (1387 aa).

N-linked (GlcNAc...) asparagine; by host glycosylation occurs at Asn6. Collagen-like domains lie at 95–154 (GNNG…KGDI), 161–220 (GDKG…KGDN), 266–325 (GEKG…KGEM), 344–403 (GSKG…KGEK), 450–508 (IKGD…KGDI), and 512–751 (GEKG…SGSS). Disordered stretches follow at residues 98-219 (GNNG…DKGD), 268-422 (KGEI…QNQG), and 454-753 (KGEK…SSCQ). 8 stretches are compositionally biased toward basic and acidic residues: residues 114 to 181 (IKGD…KGSK), 189 to 199 (SKGDNGDKGSK), 207 to 219 (SKGD…DKGD), 268 to 340 (KGEI…DGIK), 364 to 382 (KGDR…KGDN), 390 to 405 (SKGD…EKGE), 454 to 535 (KGEK…KGDI), and 544 to 747 (KGEK…DKGE). N-linked (GlcNAc...) asparagine; by host glycans are attached at residues Asn794, Asn814, Asn819, Asn826, Asn846, Asn886, Asn894, Asn969, Asn1032, Asn1077, Asn1123, Asn1200, Asn1224, Asn1232, and Asn1233.

May be hydroxylated on lysine by the viral-encoded procollagen-lysine,2-oxoglutarate 5-dioxygenase.

It is found in the virion. Its function is as follows. May participate in the formation of a layer of cross-linked glycosylated fibrils at the viral surface thus giving it a hairy-like appearance. In Acanthamoeba polyphaga mimivirus (APMV), this protein is Collagen-like protein 6.